The primary structure comprises 256 residues: Venom allergen-1 (256 aa).

The first 21 residues, 1–21, serve as a signal peptide directing secretion; sequence MAFNGIALLITATIFIGSCYA. The region spanning 65 to 211 is the SCP domain; that stretch reads LNTHNKLRAE…MINYYLVCNY (147 aa). Residues Asn-146 and Asn-210 are each glycosylated (N-linked (GlcNAc...) asparagine).

Belongs to the CRISP family.

It is found in the secreted. Functionally, activates autophagy in human monocytic cells, dendritic cells and macrophages. (Microbial infection) Promotes Zika virus replication in human dendritic cells and macrophages. Facilitates Zika virus transmission from infected mosquitoes to the host in mouse model. This chain is Venom allergen-1, found in Aedes albopictus (Asian tiger mosquito).